The sequence spans 441 residues: Arginine biosynthesis bifunctional protein ArgJ, mitochondrial (441 aa).

Residues 1–8 (MRISSTLL) constitute a mitochondrion transit peptide. Residues Thr177, Lys204, Thr215, Glu301, Asn436, and Ser441 each contribute to the substrate site. Residue Thr215 is the Nucleophile of the active site.

This sequence belongs to the ArgJ family. Heterodimer of an alpha and a beta chain. Post-translationally, the alpha and beta chains are autoproteolytically processed from a single precursor protein within the mitochondrion.

The protein resides in the mitochondrion matrix. It catalyses the reaction N(2)-acetyl-L-ornithine + L-glutamate = N-acetyl-L-glutamate + L-ornithine. It carries out the reaction L-glutamate + acetyl-CoA = N-acetyl-L-glutamate + CoA + H(+). Its pathway is amino-acid biosynthesis; L-arginine biosynthesis; L-ornithine and N-acetyl-L-glutamate from L-glutamate and N(2)-acetyl-L-ornithine (cyclic): step 1/1. It participates in amino-acid biosynthesis; L-arginine biosynthesis; N(2)-acetyl-L-ornithine from L-glutamate: step 1/4. Functionally, catalyzes two activities which are involved in the cyclic version of arginine biosynthesis: the synthesis of acetylglutamate from glutamate and acetyl-CoA, and of ornithine by transacetylation between acetylornithine and glutamate. This is Arginine biosynthesis bifunctional protein ArgJ, mitochondrial from Saccharomyces cerevisiae (strain Lalvin EC1118 / Prise de mousse) (Baker's yeast).